Here is a 137-residue protein sequence, read N- to C-terminus: Immunoglobulin domain-containing protein oig-1 (137 aa).

An N-terminal signal peptide occupies residues 1–23 (MFSELRILRDILLLCFLSVGINA). The 93-residue stretch at 41-133 (PKISRSSYFK…KGSRVKKFLT (93 aa)) folds into the Ig-like C2-type domain. Cys-63 and Cys-118 are joined by a disulfide.

Expressed in DD and VD GABAergic motor neurons. Expressed in a subset of head neurons including M2 motor neurons in the pharynx. Expressed in coelomocytes.

The protein resides in the membrane. It localises to the secreted. It is found in the extracellular space. Its subcellular location is the cell projection. The protein localises to the dendrite. The protein resides in the axon. Plays a role in neural development, where it temporally regulates synapse formation in the D-type inhibitory GABAergic motor neurons, dorsal D (DD) and ventral D (VD) motor neurons. Controls the translocation of postsynaptic proteins, such as the acetylcholine receptor subunit acr-12, and presynaptic proteins, such as snb-1, along nerve cords to prevent premature synapse remodeling/formation. This chain is Immunoglobulin domain-containing protein oig-1, found in Caenorhabditis elegans.